The sequence spans 470 residues: uncharacterized protein (470 aa).

The HTH gntR-type domain maps to 1 to 69 (MTRYQHLATL…PRSGYFVAQR (69 aa)). At lysine 313 the chain carries N6-(pyridoxal phosphate)lysine.

In the C-terminal section; belongs to the class-I pyridoxal-phosphate-dependent aminotransferase family.

This is an uncharacterized protein from Escherichia coli (strain K12).